The following is a 342-amino-acid chain: Cystein proteinase inhibitor protein salarin (342 aa).

A signal peptide spans 1 to 19; that stretch reads MKSLVLLLLVAVTVSSVVS. An N-linked (GlcNAc) asparagine glycan is attached at Asn-153. O-linked (GlcNAc) threonine glycosylation is present at Thr-184.

N-glycosylated, with sialylated biantennary complex-type glycans. Post-translationally, O-glycosylated, with sialylated oligosaccharides.

The protein localises to the cytoplasm. Its subcellular location is the vacuole. Its function is as follows. Inhibits papain and ficin (cysteine proteinases) but not trypsin (a serine proteinase). This Salvelinus alpinus (Arctic char) protein is Cystein proteinase inhibitor protein salarin (salarin).